Consider the following 600-residue polypeptide: Methionine--tRNA ligase (600 aa).

The 'HIGH' region signature appears at 12-22 (PYANGPRHIGH). Cys144, Cys147, Cys157, and Cys160 together coordinate Zn(2+). The short motif at 351–355 (KFSSS) is the 'KMSKS' region element. Ser354 serves as a coordination point for ATP.

It belongs to the class-I aminoacyl-tRNA synthetase family. MetG type 1 subfamily. As to quaternary structure, monomer. Requires Zn(2+) as cofactor.

Its subcellular location is the cytoplasm. The enzyme catalyses tRNA(Met) + L-methionine + ATP = L-methionyl-tRNA(Met) + AMP + diphosphate. Is required not only for elongation of protein synthesis but also for the initiation of all mRNA translation through initiator tRNA(fMet) aminoacylation. This Chloroflexus aurantiacus (strain ATCC 29364 / DSM 637 / Y-400-fl) protein is Methionine--tRNA ligase.